A 428-amino-acid polypeptide reads, in one-letter code: GTPase Obg (428 aa).

Residues 1–158 (MFIDTAKIFV…RWVALELKLL (158 aa)) enclose the Obg domain. The OBG-type G domain occupies 159–331 (ADVGLLGFPN…VIKEAARMLK (173 aa)). GTP-binding positions include 165–172 (GFPNVGKS), 190–194 (FTTLK), 212–215 (DVPG), 282–285 (NKCD), and 312–314 (SAA). Mg(2+) is bound by residues Ser172 and Thr192. The OCT domain occupies 345–428 (RFIPEDKKFT…LNDFEFEYLL (84 aa)).

It belongs to the TRAFAC class OBG-HflX-like GTPase superfamily. OBG GTPase family. As to quaternary structure, monomer. Mg(2+) is required as a cofactor.

It localises to the cytoplasm. An essential GTPase which binds GTP, GDP and possibly (p)ppGpp with moderate affinity, with high nucleotide exchange rates and a fairly low GTP hydrolysis rate. Plays a role in control of the cell cycle, stress response, ribosome biogenesis and in those bacteria that undergo differentiation, in morphogenesis control. The chain is GTPase Obg from Clostridium perfringens (strain ATCC 13124 / DSM 756 / JCM 1290 / NCIMB 6125 / NCTC 8237 / Type A).